A 208-amino-acid polypeptide reads, in one-letter code: Glutathione S-transferase 2 (208 aa).

Residues 1–78 enclose the GST N-terminal domain; the sequence is MSYKLTYFSI…HLARKYNLNG (78 aa). Glutathione contacts are provided by residues Tyr-7, Lys-42, 49–50, and 62–63; these read QL and QS. The GST C-terminal domain occupies 80 to 200; it reads NEMETTYIDM…YCEKRDAAKV (121 aa).

This sequence belongs to the GST superfamily. Pi family. In terms of assembly, homodimer. In terms of tissue distribution, hypodermis, wall of the seminal receptacle and spermatozoa of adult worms.

It catalyses the reaction RX + glutathione = an S-substituted glutathione + a halide anion + H(+). In terms of biological role, appears to play a central role in the parasite detoxification system. The sequence is that of Glutathione S-transferase 2 (GST2) from Onchocerca volvulus.